Reading from the N-terminus, the 320-residue chain is HPr kinase/phosphorylase (320 aa).

Active-site residues include H141 and K162. Residue 156-163 participates in ATP binding; it reads GHSGLGKS. S163 is a Mg(2+) binding site. The active-site Proton acceptor; for phosphorylation activity. Proton donor; for dephosphorylation activity is D180. The interval 204-213 is important for the catalytic mechanism of both phosphorylation and dephosphorylation; that stretch reads LEVRGLGILN. Mg(2+) is bound at residue E205. The active site involves R248. Residues 269 to 274 form an important for the catalytic mechanism of dephosphorylation region; that stretch reads PVAVGR.

This sequence belongs to the HPrK/P family. In terms of assembly, homohexamer. Requires Mg(2+) as cofactor.

It catalyses the reaction [HPr protein]-L-serine + ATP = [HPr protein]-O-phospho-L-serine + ADP + H(+). It carries out the reaction [HPr protein]-O-phospho-L-serine + phosphate + H(+) = [HPr protein]-L-serine + diphosphate. Functionally, catalyzes the ATP- as well as the pyrophosphate-dependent phosphorylation of a specific serine residue in HPr, a phosphocarrier protein of the phosphoenolpyruvate-dependent sugar phosphotransferase system (PTS). HprK/P also catalyzes the pyrophosphate-producing, inorganic phosphate-dependent dephosphorylation (phosphorolysis) of seryl-phosphorylated HPr (P-Ser-HPr). This is HPr kinase/phosphorylase from Neisseria meningitidis serogroup B (strain ATCC BAA-335 / MC58).